We begin with the raw amino-acid sequence, 948 residues long: Valine--tRNA ligase (948 aa).

Residues 40-50 (PNVTGSLHMGH) carry the 'HIGH' region motif. The 'KMSKS' region motif lies at 551-555 (KMSKS). K554 contributes to the ATP binding site. Residues 879–945 (LIDKGAELAR…GKLAEQHARI (67 aa)) are a coiled coil.

Belongs to the class-I aminoacyl-tRNA synthetase family. ValS type 1 subfamily. In terms of assembly, monomer.

It localises to the cytoplasm. The catalysed reaction is tRNA(Val) + L-valine + ATP = L-valyl-tRNA(Val) + AMP + diphosphate. Catalyzes the attachment of valine to tRNA(Val). As ValRS can inadvertently accommodate and process structurally similar amino acids such as threonine, to avoid such errors, it has a 'posttransfer' editing activity that hydrolyzes mischarged Thr-tRNA(Val) in a tRNA-dependent manner. This chain is Valine--tRNA ligase, found in Pseudomonas savastanoi pv. phaseolicola (strain 1448A / Race 6) (Pseudomonas syringae pv. phaseolicola (strain 1448A / Race 6)).